Consider the following 268-residue polypeptide: 1D-myo-inositol 2-acetamido-2-deoxy-alpha-D-glucopyranoside deacetylase (268 aa).

Residues His7, Asp10, and His142 each contribute to the Zn(2+) site.

The protein belongs to the MshB deacetylase family. The cofactor is Zn(2+).

The enzyme catalyses 1D-myo-inositol 2-acetamido-2-deoxy-alpha-D-glucopyranoside + H2O = 1D-myo-inositol 2-amino-2-deoxy-alpha-D-glucopyranoside + acetate. Catalyzes the deacetylation of 1D-myo-inositol 2-acetamido-2-deoxy-alpha-D-glucopyranoside (GlcNAc-Ins) in the mycothiol biosynthesis pathway. This chain is 1D-myo-inositol 2-acetamido-2-deoxy-alpha-D-glucopyranoside deacetylase, found in Saccharomonospora viridis (strain ATCC 15386 / DSM 43017 / JCM 3036 / CCUG 5913 / NBRC 12207 / NCIMB 9602 / P101) (Thermoactinomyces viridis).